A 126-amino-acid chain; its full sequence is Protein K7 (126 aa).

Residues 24 to 44 (LPLHLWILCSLLAFLPLLVFI) traverse the membrane as a helical segment.

In terms of assembly, interacts with host CAMLG; this interaction allows efficient apoptosis inhibition. Additionally, interacts with vGPCR/ORF74 and induces its proteasomeal degradation.

The protein resides in the host membrane. Its subcellular location is the host mitochondrion. Its function is as follows. Plays a role in the inhibition of host apoptosis to allow completion of the viral lytic replication and may thus favor the maintenance of persistent infection in infected host. This chain is Protein K7 (K7), found in Homo sapiens (Human).